The following is a 577-amino-acid chain: Arginine--tRNA ligase (577 aa).

A 'HIGH' region motif is present at residues 122-132 (PNVAKEMHVGH).

This sequence belongs to the class-I aminoacyl-tRNA synthetase family. Monomer.

The protein localises to the cytoplasm. The enzyme catalyses tRNA(Arg) + L-arginine + ATP = L-arginyl-tRNA(Arg) + AMP + diphosphate. In Escherichia coli (strain ATCC 8739 / DSM 1576 / NBRC 3972 / NCIMB 8545 / WDCM 00012 / Crooks), this protein is Arginine--tRNA ligase.